Reading from the N-terminus, the 510-residue chain is NAD(P)H-quinone oxidoreductase subunit 2 A, chloroplastic (510 aa).

Transmembrane regions (helical) follow at residues 24 to 44, 57 to 77, 99 to 119, 124 to 144, 149 to 169, 183 to 203, 227 to 247, 295 to 315, 323 to 343, 354 to 374, 395 to 415, 418 to 438, and 484 to 504; these read LLLF…GLIL, IPWL…ALLF, IFQF…VEYI, MAIT…MFLC, LITI…LSGY, YLLM…WLYG, PGIS…LSPA, WHLL…LIAI, MLAY…IVGD, YMLF…LFGL, ALSL…AGFF, LYLF…IGLL, and MIVC…IIAI.

The protein belongs to the complex I subunit 2 family. In terms of assembly, NDH is composed of at least 16 different subunits, 5 of which are encoded in the nucleus.

The protein resides in the plastid. Its subcellular location is the chloroplast thylakoid membrane. The enzyme catalyses a plastoquinone + NADH + (n+1) H(+)(in) = a plastoquinol + NAD(+) + n H(+)(out). It catalyses the reaction a plastoquinone + NADPH + (n+1) H(+)(in) = a plastoquinol + NADP(+) + n H(+)(out). Its function is as follows. NDH shuttles electrons from NAD(P)H:plastoquinone, via FMN and iron-sulfur (Fe-S) centers, to quinones in the photosynthetic chain and possibly in a chloroplast respiratory chain. The immediate electron acceptor for the enzyme in this species is believed to be plastoquinone. Couples the redox reaction to proton translocation, and thus conserves the redox energy in a proton gradient. This is NAD(P)H-quinone oxidoreductase subunit 2 A, chloroplastic from Solanum lycopersicum (Tomato).